The primary structure comprises 194 residues: Peptide deformylase (194 aa).

The disordered stretch occupies residues 71–93 (DAEPEECGHDHGDGEGAHKHYPV). Basic and acidic residues predominate over residues 76 to 93 (ECGHDHGDGEGAHKHYPV). Residues Cys119 and His161 each coordinate Fe cation. The active site involves Glu162. His165 contributes to the Fe cation binding site.

Belongs to the polypeptide deformylase family. Requires Fe(2+) as cofactor.

The catalysed reaction is N-terminal N-formyl-L-methionyl-[peptide] + H2O = N-terminal L-methionyl-[peptide] + formate. Removes the formyl group from the N-terminal Met of newly synthesized proteins. Requires at least a dipeptide for an efficient rate of reaction. N-terminal L-methionine is a prerequisite for activity but the enzyme has broad specificity at other positions. This is Peptide deformylase from Erythrobacter litoralis (strain HTCC2594).